We begin with the raw amino-acid sequence, 122 residues long: Large ribosomal subunit protein bL19c (122 aa).

This sequence belongs to the bacterial ribosomal protein bL19 family.

The protein localises to the plastid. It localises to the chloroplast. The polypeptide is Large ribosomal subunit protein bL19c (rpl19) (Rhodomonas salina (Cryptomonas salina)).